Consider the following 201-residue polypeptide: Recombination protein RecR (201 aa).

A C4-type zinc finger spans residues 57–72 (CRYCRNLSDAEVCLLC). The Toprim domain maps to 80 to 175 (QQICVVETPA…QATRLAYGVP (96 aa)).

Belongs to the RecR family.

In terms of biological role, may play a role in DNA repair. It seems to be involved in an RecBC-independent recombinational process of DNA repair. It may act with RecF and RecO. This is Recombination protein RecR from Dichelobacter nodosus (strain VCS1703A).